Reading from the N-terminus, the 305-residue chain is Cytochrome c biogenesis protein CcsA (305 aa).

Helical transmembrane passes span 13-33 (IYFS…VYPV), 42-62 (KGII…WFYS), 70-90 (LYES…FIDI), 97-117 (WIGV…TLIL), 135-155 (WLIM…CGSL), 212-232 (YTIV…AVWA), 242-262 (WDPK…YIHI), and 276-296 (VASL…ILGI).

This sequence belongs to the CcmF/CycK/Ccl1/NrfE/CcsA family. In terms of assembly, may interact with Ccs1.

Its subcellular location is the plastid. The protein resides in the chloroplast thylakoid membrane. Required during biogenesis of c-type cytochromes (cytochrome c6 and cytochrome f) at the step of heme attachment. This Welwitschia mirabilis (Tree tumbo) protein is Cytochrome c biogenesis protein CcsA.